The following is a 264-amino-acid chain: Indole-3-glycerol phosphate synthase (264 aa).

This sequence belongs to the TrpC family.

The enzyme catalyses 1-(2-carboxyphenylamino)-1-deoxy-D-ribulose 5-phosphate + H(+) = (1S,2R)-1-C-(indol-3-yl)glycerol 3-phosphate + CO2 + H2O. It functions in the pathway amino-acid biosynthesis; L-tryptophan biosynthesis; L-tryptophan from chorismate: step 4/5. This is Indole-3-glycerol phosphate synthase from Stenotrophomonas maltophilia (strain R551-3).